A 305-amino-acid polypeptide reads, in one-letter code: Probable pyridoxal 5'-phosphate synthase subunit pdx1 (305 aa).

D-ribose 5-phosphate is bound at residue D33. K90 (schiff-base intermediate with D-ribose 5-phosphate) is an active-site residue. Position 162 (G162) interacts with D-ribose 5-phosphate. Residue R174 participates in D-glyceraldehyde 3-phosphate binding. Residues G223 and 244–245 (GS) each bind D-ribose 5-phosphate.

Belongs to the PdxS/SNZ family. As to quaternary structure, homohexamer.

It catalyses the reaction aldehydo-D-ribose 5-phosphate + D-glyceraldehyde 3-phosphate + L-glutamine = pyridoxal 5'-phosphate + L-glutamate + phosphate + 3 H2O + H(+). It functions in the pathway cofactor biosynthesis; pyridoxal 5'-phosphate biosynthesis. In terms of biological role, catalyzes the formation of pyridoxal 5'-phosphate from ribose 5-phosphate (RBP), glyceraldehyde 3-phosphate (G3P) and ammonia. The ammonia is provided by pdx2. Can also use ribulose 5-phosphate and dihydroxyacetone phosphate as substrates, resulting from enzyme-catalyzed isomerization of RBP and G3P, respectively. In Dictyostelium discoideum (Social amoeba), this protein is Probable pyridoxal 5'-phosphate synthase subunit pdx1 (pdx1).